Here is a 159-residue protein sequence, read N- to C-terminus: Ribosomal RNA large subunit methyltransferase H (159 aa).

S-adenosyl-L-methionine-binding positions include leucine 76, glycine 108, and 127 to 132; that span reads FSKMTF.

Belongs to the RNA methyltransferase RlmH family. As to quaternary structure, homodimer.

The protein resides in the cytoplasm. It catalyses the reaction pseudouridine(1915) in 23S rRNA + S-adenosyl-L-methionine = N(3)-methylpseudouridine(1915) in 23S rRNA + S-adenosyl-L-homocysteine + H(+). In terms of biological role, specifically methylates the pseudouridine at position 1915 (m3Psi1915) in 23S rRNA. The sequence is that of Ribosomal RNA large subunit methyltransferase H from Lachnoclostridium phytofermentans (strain ATCC 700394 / DSM 18823 / ISDg) (Clostridium phytofermentans).